A 947-amino-acid polypeptide reads, in one-letter code: Netrin receptor unc-5 (947 aa).

The Ig-like domain occupies valine 43–phenylalanine 141. Disulfide bonds link cysteine 53/cysteine 112, cysteine 160/cysteine 209, cysteine 243/cysteine 295, cysteine 247/cysteine 299, and cysteine 273/cysteine 285. An Ig-like C2-type domain is found at lysine 139–glutamine 226. N-linked (GlcNAc...) asparagine glycosylation occurs at asparagine 206. TSP type-1 domains are found at residues aspartate 230–lysine 300 and aspartate 302–threonine 354. C-linked (Man) tryptophan glycans are attached at residues tryptophan 305 and tryptophan 308. Residues glycine 369–cysteine 389 traverse the membrane as a helical segment. Residues cysteine 390–proline 947 are Cytoplasmic-facing. Tyrosine 510 is modified (phosphotyrosine). The region spanning asparagine 530–glutamate 658 is the ZU5 domain. Positions glutamate 857 to leucine 938 constitute a Death domain.

This sequence belongs to the unc-5 family. In terms of assembly, interacts (via cytoplasmic domain) with src-1 (via SH2 domain and SH3 domain). Interacts with madd-4. Interacts with unc-129; the interaction is direct. Phosphorylated on different cytoplasmic tyrosine residues. May be phosphorylated on tyrosine residues by src-1. Tyrosine phosphorylation is unc-6-dependent. In terms of processing, glycosylated via C-mannosylation by dpy-19 at Trp-305 and Trp-308. Expressed in cell bodies and axons of the VNC motor neurons that extend axons to the dorsal midline and within the ventral nerve cord. Expressed in gonadal distal tip cells (DTC).

The protein resides in the cell membrane. Its subcellular location is the membrane raft. It is found in the cell projection. The protein localises to the neuron projection. Its function is as follows. Receptor for netrin (unc-6) required for axon guidance. Mediates axon repulsion of neuronal growth cones in the developing nervous system upon ligand binding. Axon migration is mediated by the secreted unc-6, which promotes attraction of neurons and axons through binding to the unc-40 receptor, while repulsion requires both unc-5 and unc-40 receptors. Involved in the ventral-dorsal and anterior-posterior migration of distal tip cells along the body, which may be mediated by Wnt receptor mom-5, ced-10/Rac, ced-12/ELMO and mig-2/RhoG. The polypeptide is Netrin receptor unc-5 (Caenorhabditis elegans).